The sequence spans 281 residues: Pantothenate synthetase (281 aa).

30 to 37 (MGNLHLGH) provides a ligand contact to ATP. The Proton donor role is filled by histidine 37. Glutamine 61 provides a ligand contact to (R)-pantoate. Glutamine 61 contacts beta-alanine. 149–152 (GRKD) contributes to the ATP binding site. Residue glutamine 155 coordinates (R)-pantoate. ATP contacts are provided by residues isoleucine 178 and 186–189 (MSSR).

This sequence belongs to the pantothenate synthetase family. Homodimer.

The protein localises to the cytoplasm. The enzyme catalyses (R)-pantoate + beta-alanine + ATP = (R)-pantothenate + AMP + diphosphate + H(+). The protein operates within cofactor biosynthesis; (R)-pantothenate biosynthesis; (R)-pantothenate from (R)-pantoate and beta-alanine: step 1/1. Functionally, catalyzes the condensation of pantoate with beta-alanine in an ATP-dependent reaction via a pantoyl-adenylate intermediate. The sequence is that of Pantothenate synthetase from Shewanella sediminis (strain HAW-EB3).